Reading from the N-terminus, the 88-residue chain is Small ribosomal subunit protein uS15 (88 aa).

This sequence belongs to the universal ribosomal protein uS15 family. As to quaternary structure, part of the 30S ribosomal subunit. Forms a bridge to the 50S subunit in the 70S ribosome, contacting the 23S rRNA.

Functionally, one of the primary rRNA binding proteins, it binds directly to 16S rRNA where it helps nucleate assembly of the platform of the 30S subunit by binding and bridging several RNA helices of the 16S rRNA. Its function is as follows. Forms an intersubunit bridge (bridge B4) with the 23S rRNA of the 50S subunit in the ribosome. The protein is Small ribosomal subunit protein uS15 of Mycoplasmopsis agalactiae (strain NCTC 10123 / CIP 59.7 / PG2) (Mycoplasma agalactiae).